Here is a 473-residue protein sequence, read N- to C-terminus: Sulfate adenylyltransferase subunit 1 (473 aa).

In terms of domain architecture, tr-type G spans 19–238; it reads KTLLKFLTCG…IKIKNSISSE (220 aa). The G1 stretch occupies residues 28 to 35; the sequence is GSVDDGKS. A GTP-binding site is contributed by 28–35; it reads GSVDDGKS. The G2 stretch occupies residues 86–90; the sequence is GITID. The G3 stretch occupies residues 107–110; the sequence is DTPG. Residues 107 to 111 and 162 to 165 contribute to the GTP site; these read DTPGH and NKMD. The interval 162–165 is G4; that stretch reads NKMD. Residues 200 to 202 form a G5 region; that stretch reads SAL.

The protein belongs to the TRAFAC class translation factor GTPase superfamily. Classic translation factor GTPase family. CysN/NodQ subfamily. Heterodimer composed of CysD, the smaller subunit, and CysN.

The catalysed reaction is sulfate + ATP + H(+) = adenosine 5'-phosphosulfate + diphosphate. It participates in sulfur metabolism; hydrogen sulfide biosynthesis; sulfite from sulfate: step 1/3. Its function is as follows. With CysD forms the ATP sulfurylase (ATPS) that catalyzes the adenylation of sulfate producing adenosine 5'-phosphosulfate (APS) and diphosphate, the first enzymatic step in sulfur assimilation pathway. APS synthesis involves the formation of a high-energy phosphoric-sulfuric acid anhydride bond driven by GTP hydrolysis by CysN coupled to ATP hydrolysis by CysD. This is Sulfate adenylyltransferase subunit 1 from Buchnera aphidicola subsp. Acyrthosiphon pisum (strain 5A).